The primary structure comprises 486 residues: Protein kinase C and casein kinase substrate in neurons protein 2 (486 aa).

The region spanning 11 to 282 (VEVSSDSFWE…SIKAADAVED (272 aa)) is the F-BAR domain. Positions 25–274 (KRTVKRIDDG…TIYRELEQSI (250 aa)) form a coiled coil. N6-acetyllysine is present on K53. Phosphoserine is present on S273. S313 carries the post-translational modification Phosphoserine; by PKC. Positions 315–426 (REKKKAVDGV…NPFDEDTTSG (112 aa)) are disordered. Polar residues predominate over residues 327–362 (TGINQTGDQSGQNKPGSNLSVPSNPAQSTQLQSSYN). The NPF1 signature appears at 362–364 (NPF). Phosphoserine; by IKKB is present on S373. A compositionally biased stretch (polar residues) spans 384-396 (NVSSYEKTQTYPT). S399 is modified (phosphoserine). Residues 404–416 (NNPFSSTDANGDS) show a composition bias toward polar residues. Positions 405–407 (NPF) match the NPF2 motif. The NPF3 signature appears at 417–419 (NPF). One can recognise an SH3 domain in the interval 426-486 (GTEVRVRALY…YPANYVEAIQ (61 aa)). S446 is subject to Phosphoserine.

Belongs to the PACSIN family. In terms of assembly, homodimer. May form heterooligomers with other PACSINs. Interacts (via NPF motifs) with EHD1 (via EH domain). Interacts (via NPF motifs) with EHD2 (via EH domain); this interaction probably stabilizes the caveolae. Interacts with EHD3. Interacts (via the SH3 domain) with MICALL1. Interacts with RAC1. Interacts (via SH3 domain) with DNM1, SYN1, SYNJ1 and WASL. Interacts (via F-BAR domain) with CAV1; this interaction induces membrane tubulation. Interacts with TRPV4. Forms a complex with EHD4 and MICALL1; the complex controls CDH5 trafficking and coordinates angiogenesis. In terms of processing, phosphorylated by casein kinase 2 (CK2). Phosphorylation by PKC probably decreases the membrane binding and tubulation capacities of PACSIN2, thereby modulating the lifetime of caveolae. As to expression, widely expressed (at protein level).

The protein resides in the cytoplasm. Its subcellular location is the cytoskeleton. It localises to the cytoplasmic vesicle membrane. The protein localises to the cell projection. It is found in the ruffle membrane. The protein resides in the early endosome. Its subcellular location is the recycling endosome membrane. It localises to the cell membrane. The protein localises to the membrane. It is found in the caveola. The protein resides in the cell junction. Its subcellular location is the adherens junction. Its function is as follows. Regulates the morphogenesis and endocytosis of caveolae. Lipid-binding protein that is able to promote the tubulation of the phosphatidic acid-containing membranes it preferentially binds. Plays a role in intracellular vesicle-mediated transport. Involved in the endocytosis of cell-surface receptors like the EGF receptor, contributing to its internalization in the absence of EGF stimulus. Essential for endothelial organization in sprouting angiogenesis, modulates CDH5-based junctions. Facilitates endothelial front-rear polarity during migration by recruiting EHD4 and MICALL1 to asymmetric adherens junctions between leader and follower cells. This Mus musculus (Mouse) protein is Protein kinase C and casein kinase substrate in neurons protein 2 (Pacsin2).